Consider the following 553-residue polypeptide: Probable bifunctional riboflavin biosynthesis protein RIBA 2, chloroplastic (553 aa).

The N-terminal 56 residues, 1-56 (MASISPTSSSVAALRGHPVQFVKGGAVSKEAKGSISFSPVANSNNANVKFTGLRVA), are a transit peptide targeting the chloroplast. The DHBP synthase stretch occupies residues 62–336 (DGAFPGDGYS…IADLIRYRRK (275 aa)). The segment at 70-90 (YSGNDNTVLPKSTSVRGQDYP) is disordered. The span at 72 to 85 (GNDNTVLPKSTSVR) shows a compositional bias: polar residues. D-ribulose 5-phosphate contacts are provided by residues 160–161 (RE), aspartate 165, 275–279 (RAGHT), and glutamate 299. Glutamate 161 is a binding site for Mg(2+). Histidine 278 serves as a coordination point for Mg(2+). The interval 337–553 (RDRLVERSSV…TGSNGAKGEH (217 aa)) is GTP cyclohydrolase II. GTP is bound at residue 387–391 (RVHSE). Positions 392, 403, and 405 each coordinate Zn(2+). Residues glutamine 408, 431 to 433 (EGR), and threonine 453 contribute to the GTP site. The Proton acceptor; for GTP cyclohydrolase activity role is filled by aspartate 465. Residue arginine 467 is the Nucleophile; for GTP cyclohydrolase activity of the active site. GTP is bound by residues threonine 488 and lysine 493.

In the N-terminal section; belongs to the DHBP synthase family. The protein in the C-terminal section; belongs to the GTP cyclohydrolase II family. The cofactor is Mg(2+). Mn(2+) is required as a cofactor. It depends on Zn(2+) as a cofactor.

Its subcellular location is the plastid. It localises to the chloroplast. It catalyses the reaction D-ribulose 5-phosphate = (2S)-2-hydroxy-3-oxobutyl phosphate + formate + H(+). The catalysed reaction is GTP + 4 H2O = 2,5-diamino-6-hydroxy-4-(5-phosphoribosylamino)-pyrimidine + formate + 2 phosphate + 3 H(+). It functions in the pathway cofactor biosynthesis; riboflavin biosynthesis; 2-hydroxy-3-oxobutyl phosphate from D-ribulose 5-phosphate: step 1/1. Its pathway is cofactor biosynthesis; riboflavin biosynthesis; 5-amino-6-(D-ribitylamino)uracil from GTP: step 1/4. Involved in riboflavin biosynthesis. Catalyzes both the conversion of D-ribulose 5-phosphate to formate and 3,4-dihydroxy-2-butanone 4-phosphate and the conversion of GTP to 2,5-diamino-6-ribosylamino-4(3H)-pyrimidinone 5'-phosphate (DARP), formate and pyrophosphate. The chain is Probable bifunctional riboflavin biosynthesis protein RIBA 2, chloroplastic (RIBA2) from Oryza sativa subsp. japonica (Rice).